A 345-amino-acid chain; its full sequence is Protein arginine N-methyltransferase 1 (345 aa).

An SAM-dependent MTase PRMT-type domain is found at 24–345 (ADYYFDSYSH…VKNTQQYRMR (322 aa)). S-adenosyl-L-methionine contacts are provided by His-37, Arg-46, Gly-70, Glu-92, and Glu-121. Catalysis depends on residues Glu-136 and Glu-145.

The protein belongs to the class I-like SAM-binding methyltransferase superfamily. Protein arginine N-methyltransferase family. Post-translationally, phosphorylated during flagellum resorption.

The protein localises to the nucleus. Its subcellular location is the cell projection. The protein resides in the cilium. It localises to the flagellum. The catalysed reaction is L-arginyl-[protein] + S-adenosyl-L-methionine = N(omega)-methyl-L-arginyl-[protein] + S-adenosyl-L-homocysteine + H(+). It catalyses the reaction L-arginyl-[protein] + 2 S-adenosyl-L-methionine = N(omega),N(omega)-dimethyl-L-arginyl-[protein] + 2 S-adenosyl-L-homocysteine + 2 H(+). In terms of biological role, arginine methyltransferase that methylates (mono and asymmetric dimethylation) the guanidino nitrogens of arginyl residues present in target proteins. Mediates asymmetric dimethylation of components of the axoneme during flagellum resorption, such as CCDC40/FAP172, CCDC65/FAP250, RSP1, RSP2, RPS5, RSP6, and tektin. In Chlamydomonas reinhardtii (Chlamydomonas smithii), this protein is Protein arginine N-methyltransferase 1 (PRMT1).